The following is a 930-amino-acid chain: uncharacterized protein (930 aa).

The first 20 residues, 1–20 (MPSFVLWTFHLCSQWFQGLT), serve as a signal peptide directing secretion. Residues Asn137, Asn146, Asn164, Asn210, Asn257, Asn628, Asn717, and Asn799 are each glycosylated (N-linked (GlcNAc...) asparagine).

It localises to the secreted. This is an uncharacterized protein from Arthroderma benhamiae (strain ATCC MYA-4681 / CBS 112371) (Trichophyton mentagrophytes).